We begin with the raw amino-acid sequence, 280 residues long: Tritrans,polycis-undecaprenyl-diphosphate synthase (geranylgeranyl-diphosphate specific) (280 aa).

D57 is an active-site residue. D57 lines the Mg(2+) pocket. Residues 58–61 (GNRR), R70, H74, and 102–104 (STE) contribute to the substrate site. The Proton acceptor role is filled by N105. Substrate contacts are provided by residues F106, R108, R229, and 235–237 (RIS). E248 contributes to the Mg(2+) binding site.

It belongs to the UPP synthase family. As to quaternary structure, homodimer. The cofactor is Mg(2+).

It catalyses the reaction geranylgeranyl diphosphate + 7 isopentenyl diphosphate = tri-trans,hepta-cis-undecaprenyl diphosphate + 7 diphosphate. Its function is as follows. Catalyzes the sequential condensation of isopentenyl diphosphate (IPP) with geranylgeranyl diphosphate (GGPP) to yield (2Z,6Z,10Z,14Z,18Z,22Z,26Z,30E,34E,38E)-undecaprenyl diphosphate (tritrans,heptacis-UPP). It is probably the precursor of glycosyl carrier lipids. The protein is Tritrans,polycis-undecaprenyl-diphosphate synthase (geranylgeranyl-diphosphate specific) of Methanocaldococcus jannaschii (strain ATCC 43067 / DSM 2661 / JAL-1 / JCM 10045 / NBRC 100440) (Methanococcus jannaschii).